The following is a 543-amino-acid chain: MFCYQCEQTAKGEGCTISGVCGKKPETAALQDLLVYSLIGLSEVAVEARLYGVVGHEYDEFTVKALFTTLTNVNFDDASLAEYINRAVVLREQLKYRLKAAGGRAEFTDAPATFKPAADLNGMIEQGRNVGLKSDVFAADENIRSLQHITLFGIKGVAAYADHAMILGQEDKKVFEFIYDGLAAMRNSKLGLNDWVGLALKCGEINIRAMELLDAGNTGTYGHPTITRVPLGAKKGKAILISGHDLKDLEMLLKQTEGKGINIYTHGEMLPAHAYPELKKYPHFYGHYGTAWQNQINEFAAFPGPIVMTTNCIQKPRDSYLGSIYTMGSVSWPGAVHIKNDNYDQVIKKALEMPGFTEDKPGKEILVGFGRNTVLSVAPAVIDAVKNKQLRHFFLVAGCDGAKPGRSYYTEFVEKVPQDCVVLTLACGKFRFFDKDMGAIGGIPRLLDVGQCNDAYSAVKIAMALADAFKVGVNDLPLSMILSWYEQKAAAILLSLLYLGIKDIRLGPSLPAFITPAVLDVLVKNFNIMPITTPEQDLKAILG.

[4Fe-4S] cluster contacts are provided by C3, C6, C15, and C21. H244, E268, C312, C399, C427, C452, E486, and K488 together coordinate hybrid [4Fe-2O-2S] cluster. C399 is modified (cysteine persulfide).

The protein belongs to the HCP family. Requires [4Fe-4S] cluster as cofactor. It depends on hybrid [4Fe-2O-2S] cluster as a cofactor.

It localises to the cytoplasm. The catalysed reaction is A + NH4(+) + H2O = hydroxylamine + AH2 + H(+). Its function is as follows. Catalyzes the reduction of hydroxylamine to form NH(3) and H(2)O. The polypeptide is Hydroxylamine reductase (Methanocella arvoryzae (strain DSM 22066 / NBRC 105507 / MRE50)).